A 2103-amino-acid polypeptide reads, in one-letter code: Zinc finger SWIM domain-containing protein 8 homolog (2103 aa).

The SWIM-type zinc-finger motif lies at phenylalanine 191–isoleucine 227. 6 disordered regions span residues aspartate 684 to alanine 860, serine 1237 to glycine 1262, serine 1310 to glutamine 1399, methionine 1735 to glutamine 1772, glutamine 1786 to valine 1864, and proline 1888 to histidine 1916. The span at serine 724 to histidine 740 shows a compositional bias: polar residues. Low complexity-rich tracts occupy residues alanine 754–serine 789 and glycine 835–glycine 857. Residues serine 1237–proline 1249 show a composition bias toward polar residues. The span at glycine 1320–proline 1351 shows a compositional bias: low complexity. The segment covering serine 1352 to serine 1377 has biased composition (gly residues). Over residues glutamine 1755 to proline 1764 the composition is skewed to pro residues. Composition is skewed to low complexity over residues glutamine 1786 to glutamine 1813 and alanine 1820 to glycine 1835. Composition is skewed to pro residues over residues proline 1836–proline 1859 and proline 1894–proline 1908.

The protein belongs to the ZSWIM8 family. In terms of assembly, component of the SCF-like E3 ubiquitin-protein ligase complex.

Its pathway is protein modification; protein ubiquitination. Functionally, substrate recognition component of a SCF-like E3 ubiquitin-protein ligase complex that promotes target-directed microRNA degradation (TDMD), a process that mediates degradation of microRNAs (miRNAs). The SCF-like E3 ubiquitin-protein ligase complex acts by catalyzing ubiquitination and subsequent degradation of AGO1, thereby exposing miRNAs for degradation. This is Zinc finger SWIM domain-containing protein 8 homolog from Drosophila melanogaster (Fruit fly).